The primary structure comprises 187 residues: Shikimate kinase (187 aa).

Position 14 to 19 (14 to 19 (TSGKST)) interacts with ATP. Position 18 (Ser18) interacts with Mg(2+). Residues Asp36, Arg60, and Gly82 each contribute to the substrate site. Arg120 contacts ATP. A substrate-binding site is contributed by Arg147.

It belongs to the shikimate kinase family. As to quaternary structure, monomer. It depends on Mg(2+) as a cofactor.

Its subcellular location is the cytoplasm. It carries out the reaction shikimate + ATP = 3-phosphoshikimate + ADP + H(+). It participates in metabolic intermediate biosynthesis; chorismate biosynthesis; chorismate from D-erythrose 4-phosphate and phosphoenolpyruvate: step 5/7. Its function is as follows. Catalyzes the specific phosphorylation of the 3-hydroxyl group of shikimic acid using ATP as a cosubstrate. This Chloroherpeton thalassium (strain ATCC 35110 / GB-78) protein is Shikimate kinase.